Here is a 123-residue protein sequence, read N- to C-terminus: Glycophorin-B (123 aa).

Positions 1–19 are cleaved as a signal peptide; sequence MYGKIIFVLLLSEIVSISA. Residues 93–113 traverse the membrane as a helical segment; the sequence is VVIILIILCVMAGVIGTILLI.

Belongs to the glycophorin-A family. Component of the ankyrin-1 complex in the erythrocyte, composed of ANK1, RHCE, RHAG, SLC4A1, EPB42, GYPA, GYPB and AQP1. Interacts (via the N-terminal) with RHAG; this interaction bridges the (RHAG)2(RHCE) heterotrimer with the SLC4A1 Band 3 I dimer complexed with GYPA. The N-terminal extracellular domain is heavily glycosylated on serine and threonine residues.

The protein resides in the cell membrane. Its function is as follows. Component of the ankyrin-1 complex, a multiprotein complex involved in the stability and shape of the erythrocyte membrane. The protein is Glycophorin-B of Pan troglodytes (Chimpanzee).